We begin with the raw amino-acid sequence, 285 residues long: Cytosolic Fe-S cluster assembly factor CFD1 (285 aa).

30 to 37 (GKGGVGKS) is a binding site for ATP. C206 and C209 together coordinate [4Fe-4S] cluster.

This sequence belongs to the Mrp/NBP35 ATP-binding proteins family. NUBP2/CFD1 subfamily. Heterotetramer of 2 NBP35 and 2 CFD1 chains. It depends on [4Fe-4S] cluster as a cofactor.

It localises to the cytoplasm. In terms of biological role, component of the cytosolic iron-sulfur (Fe/S) protein assembly (CIA) machinery. Required for maturation of extramitochondrial Fe-S proteins. The NBP35-CFD1 heterotetramer forms a Fe-S scaffold complex, mediating the de novo assembly of an Fe-S cluster and its transfer to target apoproteins. Required for biogenesis and export of both ribosomal subunits, which may reflect a role in assembly of the Fe/S clusters in RLI1, a protein which performs rRNA processing and ribosome export. The chain is Cytosolic Fe-S cluster assembly factor CFD1 from Candida glabrata (strain ATCC 2001 / BCRC 20586 / JCM 3761 / NBRC 0622 / NRRL Y-65 / CBS 138) (Yeast).